Consider the following 255-residue polypeptide: Octanoyltransferase (255 aa).

The region spanning 54 to 238 (GDAAELVWLL…AFTEIFGATV (185 aa)) is the BPL/LPL catalytic domain. Substrate contacts are provided by residues 92 to 99 (RGGQLTYH), 167 to 169 (AIG), and 180 to 182 (GIA). Residue Cys198 is the Acyl-thioester intermediate of the active site.

This sequence belongs to the LipB family.

The protein resides in the cytoplasm. The enzyme catalyses octanoyl-[ACP] + L-lysyl-[protein] = N(6)-octanoyl-L-lysyl-[protein] + holo-[ACP] + H(+). The protein operates within protein modification; protein lipoylation via endogenous pathway; protein N(6)-(lipoyl)lysine from octanoyl-[acyl-carrier-protein]: step 1/2. Catalyzes the transfer of endogenously produced octanoic acid from octanoyl-acyl-carrier-protein onto the lipoyl domains of lipoate-dependent enzymes. Lipoyl-ACP can also act as a substrate although octanoyl-ACP is likely to be the physiological substrate. The sequence is that of Octanoyltransferase from Rhodopseudomonas palustris (strain HaA2).